We begin with the raw amino-acid sequence, 408 residues long: Multidrug resistance protein MdtG (408 aa).

The next 11 membrane-spanning stretches (helical) occupy residues Leu-16–Phe-36, Ile-58–Ala-78, Leu-92–Ile-112, Ala-115–Val-135, Thr-146–Ala-166, Pro-173–Ile-193, Leu-224–Leu-244, Val-256–Pro-276, Ile-290–Thr-310, Phe-319–Asn-339, and Ala-378–Leu-398.

This sequence belongs to the major facilitator superfamily. DHA1 family. MdtG (TC 2.A.1.2.20) subfamily.

The protein localises to the cell inner membrane. In terms of biological role, confers resistance to fosfomycin and deoxycholate. The polypeptide is Multidrug resistance protein MdtG (Escherichia coli O139:H28 (strain E24377A / ETEC)).